A 499-amino-acid polypeptide reads, in one-letter code: Rhamnogalacturonate lyase A (499 aa).

An N-terminal signal peptide occupies residues 1–20; that stretch reads MLSKTSLLSLLSLAAGVVNA. 2 cysteine pairs are disulfide-bonded: cysteine 49–cysteine 92 and cysteine 183–cysteine 192.

This sequence belongs to the polysaccharide lyase 4 family.

It localises to the secreted. It carries out the reaction Endotype eliminative cleavage of L-alpha-rhamnopyranosyl-(1-&gt;4)-alpha-D-galactopyranosyluronic acid bonds of rhamnogalacturonan I domains in ramified hairy regions of pectin leaving L-rhamnopyranose at the reducing end and 4-deoxy-4,5-unsaturated D-galactopyranosyluronic acid at the non-reducing end.. Functionally, pectinolytic enzymes consist of four classes of enzymes: pectin lyase, polygalacturonase, pectin methylesterase and rhamnogalacturonase. Degrades the rhamnogalacturonan I (RG-I) backbone of pectin. This chain is Rhamnogalacturonate lyase A (rglA), found in Aspergillus niger.